The following is a 249-amino-acid chain: Eukaryotic translation initiation factor 3 subunit J-A (249 aa).

The segment covering 1–15 (MADADSWDADSFEPE) has biased composition (acidic residues). The tract at residues 1–104 (MADADSWDAD…DTPLTPEDEL (104 aa)) is disordered. The span at 16–27 (EPIKKAAVHDKW) shows a compositional bias: basic and acidic residues. Positions 28–52 (EGEDEDDDVKDNWDDDEEEEKEEEE) are enriched in acidic residues. Residues 34 to 96 (DDVKDNWDDD…QQLEETKRDT (63 aa)) are a coiled coil. The span at 53-96 (EKKTEAKPTEKKKLSEKIKEKENLQRKKQEELRKQQLEETKRDT) shows a compositional bias: basic and acidic residues.

The protein belongs to the eIF-3 subunit J family. Component of the eukaryotic translation initiation factor 3 (eIF-3) complex, which is composed of 13 subunits: eif3a, eif3b, eif3c, eif3d, eif3e, eif3f, eif3g, eif3h, eif3i, eif3j, eif3k, eif3l and eif3m.

The protein localises to the cytoplasm. Component of the eukaryotic translation initiation factor 3 (eIF-3) complex, which is involved in protein synthesis of a specialized repertoire of mRNAs and, together with other initiation factors, stimulates binding of mRNA and methionyl-tRNAi to the 40S ribosome. The eIF-3 complex specifically targets and initiates translation of a subset of mRNAs involved in cell proliferation. The sequence is that of Eukaryotic translation initiation factor 3 subunit J-A (eif3ja) from Danio rerio (Zebrafish).